A 748-amino-acid chain; its full sequence is Basic juvenile hormone-suppressible protein 1 (748 aa).

The N-terminal stretch at 1–17 is a signal peptide; sequence MRVLVLVASLGLRGSVV.

Belongs to the hemocyanin family. In terms of tissue distribution, fat body, and hemolymph of larvae.

The chain is Basic juvenile hormone-suppressible protein 1 (BJSP-1) from Trichoplusia ni (Cabbage looper).